We begin with the raw amino-acid sequence, 170 residues long: Adenine phosphoribosyltransferase (170 aa).

This sequence belongs to the purine/pyrimidine phosphoribosyltransferase family. Homodimer.

It localises to the cytoplasm. The enzyme catalyses AMP + diphosphate = 5-phospho-alpha-D-ribose 1-diphosphate + adenine. It functions in the pathway purine metabolism; AMP biosynthesis via salvage pathway; AMP from adenine: step 1/1. Its function is as follows. Catalyzes a salvage reaction resulting in the formation of AMP, that is energically less costly than de novo synthesis. This Carboxydothermus hydrogenoformans (strain ATCC BAA-161 / DSM 6008 / Z-2901) protein is Adenine phosphoribosyltransferase.